We begin with the raw amino-acid sequence, 329 residues long: uncharacterized protein (329 aa).

7 helical membrane-spanning segments follow: residues 29-49, 78-98, 120-140, 164-184, 217-237, 260-280, and 299-319; these read IVLW…AISH, VLVA…CWMG, KKWL…SLLV, WMIG…LIYL, YFFL…LLVI, FFWT…SFIV, and GSSL…LLFI.

To M.pneumoniae MPN_129.

The protein localises to the cell membrane. This is an uncharacterized protein from Mycoplasma pneumoniae (strain ATCC 29342 / M129 / Subtype 1) (Mycoplasmoides pneumoniae).